The sequence spans 483 residues: Cysteine proteinase 1, mitochondrial (483 aa).

Residues 1–30 (MLPTSVSRSLYLKTFRSHLLRAPQIVLKRM) constitute a mitochondrion transit peptide. Active-site residues include Cys102, His398, and Asn421. Lys483 is a propeptide (removed in mature form; by autocatalysis).

It belongs to the peptidase C1 family. As to quaternary structure, homohexamer. Binds to nucleic acids. Binds single-stranded DNA and RNA with higher affinity than double-stranded DNA. The N-terminus of isoform Cytoplasmic is blocked.

Its subcellular location is the mitochondrion. It localises to the cytoplasm. It carries out the reaction Inactivates bleomycin B2 (a cytotoxic glycometallopeptide) by hydrolysis of a carboxyamide bond of beta-aminoalanine, but also shows general aminopeptidase activity. The specificity varies somewhat with source, but amino acid arylamides of Met, Leu and Ala are preferred.. Inhibited by E64, a specific inhibitor of cysteine proteases, N-ethylmaleimide, iodacetamide, and mercury and zinc ions. The normal physiological role of the enzyme is unknown, but it is not essential for the viability of yeast cells. Has aminopeptidase activity, shortening substrate peptides sequentially by 1 amino acid. Has bleomycin hydrolase activity, which can protect the cell from the toxic effects of bleomycin. Has homocysteine-thiolactonase activity, protecting the cell against homocysteine toxicity. Acts as a repressor in the GAL4 regulatory system, but this does not require either the peptidase or nucleic acid-binding activities. This chain is Cysteine proteinase 1, mitochondrial (LAP3), found in Saccharomyces cerevisiae (strain AWRI1631) (Baker's yeast).